The sequence spans 589 residues: Putative ABC transporter ATP-binding protein MG015 (589 aa).

6 helical membrane-spanning segments follow: residues 9–29 (LLYV…NPIL), 66–86 (LTIV…FNVA), 161–181 (LIFL…ATLI), 251–271 (IFLF…SISI), 280–300 (IPSF…IASL), and 303–323 (ITLA…GVVS). The 311-residue stretch at 9–319 (LLYVFLCIVL…IFTLWNLVQL (311 aa)) folds into the ABC transmembrane type-1 domain. The ABC transporter domain maps to 352 to 586 (IRFENVAFGY…NGFYARLKQS (235 aa)). 385 to 392 (GPTGAGKS) provides a ligand contact to ATP.

Belongs to the ABC transporter superfamily.

It is found in the cell membrane. The chain is Putative ABC transporter ATP-binding protein MG015 from Mycoplasma genitalium (strain ATCC 33530 / DSM 19775 / NCTC 10195 / G37) (Mycoplasmoides genitalium).